The sequence spans 93 residues: Small ribosomal subunit protein bS16 (93 aa).

This sequence belongs to the bacterial ribosomal protein bS16 family.

In Opitutus terrae (strain DSM 11246 / JCM 15787 / PB90-1), this protein is Small ribosomal subunit protein bS16.